Consider the following 225-residue polypeptide: UPF0128 protein PH1314 (225 aa).

The protein belongs to the UPF0128 family.

The polypeptide is UPF0128 protein PH1314 (Pyrococcus horikoshii (strain ATCC 700860 / DSM 12428 / JCM 9974 / NBRC 100139 / OT-3)).